A 101-amino-acid chain; its full sequence is Iron-sulfur cluster assembly protein CyaY (101 aa).

It belongs to the frataxin family.

Its function is as follows. Involved in iron-sulfur (Fe-S) cluster assembly. May act as a regulator of Fe-S biogenesis. This chain is Iron-sulfur cluster assembly protein CyaY, found in Rickettsia akari (strain Hartford).